Reading from the N-terminus, the 262-residue chain is Thrombin-like enzyme gyroxin B1.4 (262 aa).

The N-terminal stretch at 1–18 (MVLIRVLANLLILQLSYA) is a signal peptide. The propeptide occupies 19–262 (QKSSELVIGG…AGNTIVNCPP (244 aa)). Positions 25-253 (VIGGDECNIN…HLDWIQSIIA (229 aa)) constitute a Peptidase S1 domain. 6 disulfides stabilise this stretch: Cys31/Cys165, Cys52/Cys68, Cys102/Cys260, Cys144/Cys214, Cys176/Cys193, and Cys204/Cys229. The active-site Charge relay system is the His67. N-linked (GlcNAc...) asparagine glycosylation is present at Asn105. The active-site Charge relay system is Asp112. Residue Ser208 is the Charge relay system of the active site.

It belongs to the peptidase S1 family. Snake venom subfamily. In terms of assembly, monomer. Expressed by the venom gland.

Its subcellular location is the secreted. Functionally, thrombin-like snake venom serine protease. Displays a specificity similar to trypsin. Releases only fibrinopeptide A in the conversion of fibrinogen to fibrin. Shows coagulant, esterase and amidase activities. Reversibly increases the permeability of the blood brain barrier (BBB) in mice. Induces the barrel rotation syndrome in mice, which is manifested by gyroxin-like, rapid rolling motions. This syndrome may be due to its effect on BBB permeability, and certainly also to other actions affecting endogenous substrates present in the endothelium, nervous tissues or blood. The sequence is that of Thrombin-like enzyme gyroxin B1.4 from Crotalus durissus terrificus (South American rattlesnake).